We begin with the raw amino-acid sequence, 184 residues long: Putative manganese efflux pump MntP (184 aa).

6 helical membrane-spanning segments follow: residues 5–25 (LISI…VSLT), 38–58 (ILYY…IGYI), 67–87 (VSTV…LNMI), 107–127 (LTLL…TFAL), 133–153 (LLPC…GIFI), and 164–184 (KFEI…LLGY).

The protein belongs to the MntP (TC 9.B.29) family.

The protein resides in the cell membrane. In terms of biological role, probably functions as a manganese efflux pump. This chain is Putative manganese efflux pump MntP, found in Methanobrevibacter smithii (strain ATCC 35061 / DSM 861 / OCM 144 / PS).